The chain runs to 953 residues: Isoleucine--tRNA ligase (953 aa).

Residues 57-67 (PYANGDIHIGH) carry the 'HIGH' region motif. Glu-582 provides a ligand contact to L-isoleucyl-5'-AMP. Positions 623–627 (KMSKS) match the 'KMSKS' region motif. Lys-626 is a binding site for ATP. Residues Cys-916, Cys-919, Cys-936, and Cys-939 each contribute to the Zn(2+) site.

The protein belongs to the class-I aminoacyl-tRNA synthetase family. IleS type 1 subfamily. In terms of assembly, monomer. Requires Zn(2+) as cofactor.

The protein resides in the cytoplasm. It carries out the reaction tRNA(Ile) + L-isoleucine + ATP = L-isoleucyl-tRNA(Ile) + AMP + diphosphate. Catalyzes the attachment of isoleucine to tRNA(Ile). As IleRS can inadvertently accommodate and process structurally similar amino acids such as valine, to avoid such errors it has two additional distinct tRNA(Ile)-dependent editing activities. One activity is designated as 'pretransfer' editing and involves the hydrolysis of activated Val-AMP. The other activity is designated 'posttransfer' editing and involves deacylation of mischarged Val-tRNA(Ile). This is Isoleucine--tRNA ligase from Bordetella avium (strain 197N).